Consider the following 325-residue polypeptide: Ribosomal RNA small subunit methyltransferase H (325 aa).

Positions 1 to 28 (MTASQPLDQADQDSESSSAGSSAAETEH) are disordered. Residues 15-24 (ESSSAGSSAA) show a composition bias toward low complexity. S-adenosyl-L-methionine is bound by residues 56–58 (GGH), Asp82, Tyr110, Asp131, and Gln138. A disordered region spans residues 303-325 (TDEEVQANPRSRSAKLRVAKRVE). Basic residues predominate over residues 314–325 (RSAKLRVAKRVE).

Belongs to the methyltransferase superfamily. RsmH family.

The protein localises to the cytoplasm. The enzyme catalyses cytidine(1402) in 16S rRNA + S-adenosyl-L-methionine = N(4)-methylcytidine(1402) in 16S rRNA + S-adenosyl-L-homocysteine + H(+). Its function is as follows. Specifically methylates the N4 position of cytidine in position 1402 (C1402) of 16S rRNA. The sequence is that of Ribosomal RNA small subunit methyltransferase H from Rhodopirellula baltica (strain DSM 10527 / NCIMB 13988 / SH1).